The primary structure comprises 347 residues: Dihydroorotate dehydrogenase (quinone) (347 aa).

FMN is bound by residues 62–66 (AGLDK) and Ala-86. Lys-66 provides a ligand contact to substrate. 111–115 (NRMGF) contacts substrate. Residues Asn-139 and Asn-172 each coordinate FMN. Asn-172 lines the substrate pocket. Catalysis depends on Ser-175, which acts as the Nucleophile. Asn-177 serves as a coordination point for substrate. Positions 217 and 245 each coordinate FMN. 246–247 (NT) lines the substrate pocket. FMN contacts are provided by residues Gly-268, Gly-297, and 318-319 (YT).

Belongs to the dihydroorotate dehydrogenase family. Type 2 subfamily. Monomer. FMN serves as cofactor.

Its subcellular location is the cell membrane. It carries out the reaction (S)-dihydroorotate + a quinone = orotate + a quinol. It functions in the pathway pyrimidine metabolism; UMP biosynthesis via de novo pathway; orotate from (S)-dihydroorotate (quinone route): step 1/1. Functionally, catalyzes the conversion of dihydroorotate to orotate with quinone as electron acceptor. This Coxiella burnetii (strain CbuK_Q154) (Coxiella burnetii (strain Q154)) protein is Dihydroorotate dehydrogenase (quinone).